We begin with the raw amino-acid sequence, 983 residues long: Protein translocase subunit SecA (983 aa).

ATP is bound by residues Gln-83, 101–105 (GEGKT), and Asp-489. The tract at residues 948–983 (ISSEEEDNNEKTNINNNEDLERTKGEAQQTAKNPNE) is disordered. Polar residues predominate over residues 973-983 (EAQQTAKNPNE).

This sequence belongs to the SecA family. As to quaternary structure, monomer and homodimer. Part of the essential Sec protein translocation apparatus which comprises SecA, SecYEG and auxiliary proteins SecDF. Other proteins may also be involved.

Its subcellular location is the cell membrane. It localises to the cytoplasm. It carries out the reaction ATP + H2O + cellular proteinSide 1 = ADP + phosphate + cellular proteinSide 2.. In terms of biological role, part of the Sec protein translocase complex. Interacts with the SecYEG preprotein conducting channel. Has a central role in coupling the hydrolysis of ATP to the transfer of proteins into and across the cell membrane, serving as an ATP-driven molecular motor driving the stepwise translocation of polypeptide chains across the membrane. The protein is Protein translocase subunit SecA of Mesomycoplasma hyopneumoniae (strain J / ATCC 25934 / NCTC 10110) (Mycoplasma hyopneumoniae).